Reading from the N-terminus, the 311-residue chain is Methionyl-tRNA formyltransferase (311 aa).

109 to 112 contributes to the (6S)-5,6,7,8-tetrahydrofolate binding site; that stretch reads SLLP.

It belongs to the Fmt family.

It catalyses the reaction L-methionyl-tRNA(fMet) + (6R)-10-formyltetrahydrofolate = N-formyl-L-methionyl-tRNA(fMet) + (6S)-5,6,7,8-tetrahydrofolate + H(+). In terms of biological role, attaches a formyl group to the free amino group of methionyl-tRNA(fMet). The formyl group appears to play a dual role in the initiator identity of N-formylmethionyl-tRNA by promoting its recognition by IF2 and preventing the misappropriation of this tRNA by the elongation apparatus. This Moorella thermoacetica (strain ATCC 39073 / JCM 9320) protein is Methionyl-tRNA formyltransferase.